A 45-amino-acid chain; its full sequence is AASGASIFSAKCAQCHLGGKNIINPTKTLSLADLQANGKDTVSAI.

Heme c-binding residues include Cys12, Cys15, and His16.

The protein belongs to the cytochrome c family. PetJ subfamily. As to quaternary structure, monomer. Post-translationally, binds 1 heme c group covalently per subunit.

It is found in the cellular thylakoid lumen. Functions as an electron carrier between membrane-bound cytochrome b6-f and photosystem I in oxygenic photosynthesis. The chain is Cytochrome c6 (petJ) from Prochlorothrix hollandica.